The primary structure comprises 94 residues: uncharacterized protein (94 aa).

The chain crosses the membrane as a helical span at residues 13-33 (IVICLTTIISVTIFYILVSFF).

The protein resides in the membrane. This is an uncharacterized protein from Dictyostelium discoideum (Social amoeba).